The sequence spans 150 residues: Cell division protein SepF (150 aa).

This sequence belongs to the SepF family. In terms of assembly, homodimer. Interacts with FtsZ.

It is found in the cytoplasm. In terms of biological role, cell division protein that is part of the divisome complex and is recruited early to the Z-ring. Probably stimulates Z-ring formation, perhaps through the cross-linking of FtsZ protofilaments. Its function overlaps with FtsA. In Clostridium botulinum (strain ATCC 19397 / Type A), this protein is Cell division protein SepF.